A 389-amino-acid polypeptide reads, in one-letter code: Probable tRNA sulfurtransferase (389 aa).

Residues 57 to 165 form the THUMP domain; sequence DEALDRLSKI…EDETYIYHRV (109 aa). Residues 183 to 184, lysine 267, glycine 289, and glutamine 298 each bind ATP; that span reads LL.

The protein belongs to the ThiI family.

The protein localises to the cytoplasm. It carries out the reaction [ThiI sulfur-carrier protein]-S-sulfanyl-L-cysteine + a uridine in tRNA + 2 reduced [2Fe-2S]-[ferredoxin] + ATP + H(+) = [ThiI sulfur-carrier protein]-L-cysteine + a 4-thiouridine in tRNA + 2 oxidized [2Fe-2S]-[ferredoxin] + AMP + diphosphate. The enzyme catalyses [ThiS sulfur-carrier protein]-C-terminal Gly-Gly-AMP + S-sulfanyl-L-cysteinyl-[cysteine desulfurase] + AH2 = [ThiS sulfur-carrier protein]-C-terminal-Gly-aminoethanethioate + L-cysteinyl-[cysteine desulfurase] + A + AMP + 2 H(+). It functions in the pathway cofactor biosynthesis; thiamine diphosphate biosynthesis. Its function is as follows. Catalyzes the ATP-dependent transfer of a sulfur to tRNA to produce 4-thiouridine in position 8 of tRNAs, which functions as a near-UV photosensor. Also catalyzes the transfer of sulfur to the sulfur carrier protein ThiS, forming ThiS-thiocarboxylate. This is a step in the synthesis of thiazole, in the thiamine biosynthesis pathway. The sulfur is donated as persulfide by IscS. The chain is Probable tRNA sulfurtransferase from Methanothermobacter thermautotrophicus (strain ATCC 29096 / DSM 1053 / JCM 10044 / NBRC 100330 / Delta H) (Methanobacterium thermoautotrophicum).